We begin with the raw amino-acid sequence, 297 residues long: MAGAASPDHLFGLRNSFYVGAYQAVITGVQAIPARAALSPDALAERDSLLYRSYIAIGSHQLVIDEIGPGAATPLQAVRLLTVYLSGGAGGKESAIRKLNELLADDAVGSNPILRLVAGTVLMHERDYAGALKHTNSGGTMELLAMNVQICLQMHRSDHAEKQLRIMQQLDEDHTLTQLANAWVDLVMGGSKIQEAHLIFQDLSEKYPATCLILNGKALCLMHMGNFEDAEGLLLESLNKDAKDAETLANLVVCSLNLGKSASRYLNQLKLAHPDHMLVKRMSSAEDSFDRACQAIS.

Belongs to the COPE family. Oligomeric complex that consists of at least the alpha, beta, beta', gamma, delta, epsilon and zeta subunits.

It is found in the cytoplasm. The protein localises to the golgi apparatus membrane. It localises to the cytoplasmic vesicle. The protein resides in the COPI-coated vesicle membrane. Its function is as follows. The coatomer is a cytosolic protein complex that binds to dilysine motifs and reversibly associates with Golgi non-clathrin-coated vesicles, which further mediate biosynthetic protein transport from the ER, via the Golgi up to the trans Golgi network. The coatomer complex is required for budding from Golgi membranes, and is essential for the retrograde Golgi-to-ER transport of dilysine-tagged proteins. The chain is Coatomer subunit epsilon-2 from Oryza sativa subsp. japonica (Rice).